Consider the following 242-residue polypeptide: Segregation and condensation protein A (242 aa).

It belongs to the ScpA family. As to quaternary structure, component of a cohesin-like complex composed of ScpA, ScpB and the Smc homodimer, in which ScpA and ScpB bind to the head domain of Smc. The presence of the three proteins is required for the association of the complex with DNA.

The protein resides in the cytoplasm. In terms of biological role, participates in chromosomal partition during cell division. May act via the formation of a condensin-like complex containing Smc and ScpB that pull DNA away from mid-cell into both cell halves. The protein is Segregation and condensation protein A of Streptococcus mitis.